We begin with the raw amino-acid sequence, 495 residues long: L-arabinose isomerase (495 aa).

Mn(2+) is bound by residues Glu-305, Glu-332, His-349, and His-448.

This sequence belongs to the arabinose isomerase family. Requires Mn(2+) as cofactor.

It carries out the reaction beta-L-arabinopyranose = L-ribulose. It functions in the pathway carbohydrate degradation; L-arabinose degradation via L-ribulose; D-xylulose 5-phosphate from L-arabinose (bacterial route): step 1/3. Its function is as follows. Catalyzes the conversion of L-arabinose to L-ribulose. The chain is L-arabinose isomerase from Actinobacillus succinogenes (strain ATCC 55618 / DSM 22257 / CCUG 43843 / 130Z).